Consider the following 88-residue polypeptide: Large ribosomal subunit protein bL31B (88 aa).

This sequence belongs to the bacterial ribosomal protein bL31 family. Type B subfamily. As to quaternary structure, part of the 50S ribosomal subunit.

This is Large ribosomal subunit protein bL31B from Corynebacterium diphtheriae (strain ATCC 700971 / NCTC 13129 / Biotype gravis).